Here is a 60-residue protein sequence, read N- to C-terminus: Defensin-like protein 4 (60 aa).

Disulfide bonds link Cys4-Cys56, Cys17-Cys41, Cys26-Cys51, and Cys30-Cys53.

It belongs to the DEFL family. Protease inhibitor I18 (RTI/MTI-2) subfamily.

The protein localises to the secreted. Inhibits trypsin and chymotrypsin. The polypeptide is Defensin-like protein 4 (Brassica napus (Rape)).